Here is a 38-residue protein sequence, read N- to C-terminus: Alpha-conotoxin PeIA (38 aa).

Residues 1–21 constitute a propeptide that is removed on maturation; sequence FDGRNAAANDKASDLVALTVR. 2 disulfide bridges follow: C23/C29 and C24/C37. The tract at residues 25–27 is ser-Xaa-Pro motif, crucial for potent interaction with nAChR; that stretch reads SHP. C37 carries the post-translational modification Cysteine amide.

Belongs to the conotoxin A superfamily. Post-translationally, the hydroxylation at position Pro-27 is critical, since an hydroxylation at this position decreases potency of the toxin to inhibit both alpha-3-beta-2 (1300-fold) and alpha-6/alpha-3-beta-2-beta-3 (130-fold) nAChRs. A non-modified residue at position Pro-34 is critical, since a hydroxylation at this position decreases potency of the toxin to inhibit alpha-3-beta-2 (1-45-fold) and increases potency to inhibit alpha-6/alpha-3-beta-2-beta-3 (1.77-fold) nAChRs. Expressed by the venom duct.

The protein localises to the secreted. Functionally, alpha-conotoxins act on postsynaptic membranes, they bind to the nicotinic acetylcholine receptors (nAChR) and thus inhibit them. This synthetic peptide potently and reversibly blocks alpha-9-alpha-10/CHRNA9-CHRNA10 nAChR (IC(50)=6.9-54.9 nM), alpha-3-beta-2/CHRNA3-CHRNB2 (IC(50)=9.7-97.5 nM) and alpha-6/alpha-3-beta-2-beta-3 (CHRNA6/CHRNA3-CHRNB2-CHRNB3) (IC(50)=11.1-17.2 nM). It also inhibits alpha-6/alpha-3-beta-4 (CHRNA6/CHRNA3-CHRNB4) nAChR with a higher potency on human (IC(50)=6.75 nM) than on rat receptors (IC(50)=130-147 nM). Also shows a weak ability to inhibit alpha-3-beta-4/CHRNA3-CHRNB4 (IC(50)=480-1500 nM). This synthetic toxin also inhibits N-type calcium channels (Ca2.2/CACNA1B) (IC(50)=1.1 nM) via the activation of the G protein-coupled GABA(B) receptor in DRG neurons. Also exhibits inhibition of D.melanogaster alpha-7/CHRNA7 nAChRs. This is Alpha-conotoxin PeIA from Conus pergrandis (Grand cone).